The chain runs to 391 residues: Ethanol acetyltransferase 1 (391 aa).

The N-terminal 24 residues, 1-24, are a transit peptide targeting the mitochondrion; it reads MFFTKVLNNQVANGLKQLPVHKRV. Positions 48 to 154 constitute an AB hydrolase-1 domain; the sequence is PIVFVHGIFG…DNSPIEQPHI (107 aa). Active-site charge relay system residues include Ser121, Asp145, and His295.

The protein belongs to the AB hydrolase superfamily.

The protein localises to the mitochondrion. The catalysed reaction is ethanol + acetyl-CoA = ethyl acetate + CoA. It catalyses the reaction acetyl-CoA + H2O = acetate + CoA + H(+). It carries out the reaction ethyl acetate + H2O = ethanol + acetate + H(+). Its activity is regulated as follows. By ethanol. Thioesterase and esterase reactions are highly repressed in the presence of high ethanol concentrations. Its function is as follows. Alcohol acetyltransferase that catalyzes the synthesis of ethyl acetate from ethanol and acetyl-CoA. Can also function as a thioesterase by hydrolyzing acetyl-CoA in the absence of ethanol, as well as esterase hydrolyzing ethyl acetate. The chain is Ethanol acetyltransferase 1 (EAT1) from Wickerhamomyces anomalus (strain ATCC 58044 / CBS 1984 / NCYC 433 / NRRL Y-366-8) (Yeast).